The following is an 86-amino-acid chain: MQVIVVYDVPAKRTRIYRKLLRRRLEHLQYSVFFGELTAGQVTAMKNEIESELEPTDSIVVFEFDNPHAFDHTTFGDADEPGSRFT.

Mg(2+) is bound at residue Asp-8.

This sequence belongs to the CRISPR-associated endoribonuclease Cas2 protein family. In terms of assembly, homodimer, forms a heterotetramer with a Cas1 homodimer. It depends on Mg(2+) as a cofactor.

Its function is as follows. CRISPR (clustered regularly interspaced short palindromic repeat), is an adaptive immune system that provides protection against mobile genetic elements (viruses, transposable elements and conjugative plasmids). CRISPR clusters contain sequences complementary to antecedent mobile elements and target invading nucleic acids. CRISPR clusters are transcribed and processed into CRISPR RNA (crRNA). Functions as a ssRNA-specific endoribonuclease. Involved in the integration of spacer DNA into the CRISPR cassette. Plasmid targeted by CRISPR locus P1 transform wild-type cells very poorly. This is CRISPR-associated endoribonuclease Cas2 from Haloferax volcanii (strain ATCC 29605 / DSM 3757 / JCM 8879 / NBRC 14742 / NCIMB 2012 / VKM B-1768 / DS2) (Halobacterium volcanii).